Here is a 473-residue protein sequence, read N- to C-terminus: Cytochrome c-552 (473 aa).

Residues 1–33 form the signal peptide; that stretch reads MQHGDEMMKKMTGKSFALSALVAASFMAAGAMA. His93 is a heme c binding site. The heme site is built by Cys121, Cys124, and Lys125. Residues Cys159, Cys162, His163, Cys201, Cys204, and His205 each contribute to the heme c site. Glu207, Tyr208, Lys256, and Gln258 together coordinate Ca(2+). Tyr208 is a substrate binding site. His259 serves as a coordination point for substrate. Residues His270, Cys277, Cys280, His281, His296, Cys309, Cys312, His313, and His388 each contribute to the heme c site.

The protein belongs to the cytochrome c-552 family. The cofactor is Ca(2+). Heme c serves as cofactor.

It localises to the periplasm. It catalyses the reaction 6 Fe(III)-[cytochrome c] + NH4(+) + 2 H2O = 6 Fe(II)-[cytochrome c] + nitrite + 8 H(+). It functions in the pathway nitrogen metabolism; nitrate reduction (assimilation). In terms of biological role, catalyzes the reduction of nitrite to ammonia, consuming six electrons in the process. The chain is Cytochrome c-552 from Shewanella sp. (strain ANA-3).